Consider the following 486-residue polypeptide: Scarecrow-like protein 15 (486 aa).

The tract at residues 1 to 28 is disordered; that stretch reads MKIPASSPQDTTNNNNNTNSTDSNHLSM. The segment covering 10–24 has biased composition (low complexity); the sequence is DTTNNNNNTNSTDSN. Positions 113-485 constitute a GRAS domain; sequence DSVDNGGFDF…RALVATSAWR (373 aa). Residues 120–179 form a leucine repeat I (LRI) region; that stretch reads FDFIEDLIRVVDCVESDELQLAQVVLSRLNQRLRSPAGRPLQRAAFYFKEALGSFLTGSN. The segment at 198–266 is VHIID; sequence IKEYSGISPI…VSGGFLRVTA (69 aa). The short motif at 232-236 is the VHIID element; sequence VHVVD. Positions 278-310 are leucine repeat II (LRII); sequence LVKENLTQFAAEMKIRFQIEFVLMKTFEMLSFK. The interval 320 to 410 is PFYRE; that stretch reads TVVLISPAIF…AFVLRPKISA (91 aa). Residues 413 to 485 form an SAW region; that stretch reads ETAADRRHTG…RALVATSAWR (73 aa).

The protein belongs to the GRAS family. As to expression, expressed in seedlings, roots, leaves and flowers.

The protein resides in the nucleus. Functionally, probable transcription factor involved in plant development. The protein is Scarecrow-like protein 15 (SCL15) of Arabidopsis thaliana (Mouse-ear cress).